The primary structure comprises 206 residues: uncharacterized protein (206 aa).

Residues 81 to 132 are disordered; sequence EEQQQQQHHVHGPGCSHGHHHDSHANDGHHDEHHDEHHDHVNPDDVEDEFPR. Over residues 82-96 the composition is skewed to low complexity; sequence EQQQQQHHVHGPGCS. Residues 103–123 show a composition bias toward basic and acidic residues; that stretch reads SHANDGHHDEHHDEHHDHVNP. A helical transmembrane segment spans residues 150–166; that stretch reads YLTALCLLPIIGSLFSI.

It localises to the membrane. This is an uncharacterized protein from Dictyostelium discoideum (Social amoeba).